The chain runs to 95 residues: Aspartyl/glutamyl-tRNA(Asn/Gln) amidotransferase subunit C (95 aa).

Belongs to the GatC family. Heterotrimer of A, B and C subunits.

It carries out the reaction L-glutamyl-tRNA(Gln) + L-glutamine + ATP + H2O = L-glutaminyl-tRNA(Gln) + L-glutamate + ADP + phosphate + H(+). It catalyses the reaction L-aspartyl-tRNA(Asn) + L-glutamine + ATP + H2O = L-asparaginyl-tRNA(Asn) + L-glutamate + ADP + phosphate + 2 H(+). Functionally, allows the formation of correctly charged Asn-tRNA(Asn) or Gln-tRNA(Gln) through the transamidation of misacylated Asp-tRNA(Asn) or Glu-tRNA(Gln) in organisms which lack either or both of asparaginyl-tRNA or glutaminyl-tRNA synthetases. The reaction takes place in the presence of glutamine and ATP through an activated phospho-Asp-tRNA(Asn) or phospho-Glu-tRNA(Gln). The protein is Aspartyl/glutamyl-tRNA(Asn/Gln) amidotransferase subunit C of Chlorobium limicola (strain DSM 245 / NBRC 103803 / 6330).